A 209-amino-acid chain; its full sequence is Large ribosomal subunit protein uL3 (209 aa).

Positions 128–163 (FGGGSRTHGQSDRLRAPGSVGGSSDPSRTFRGTRMA) are disordered.

It belongs to the universal ribosomal protein uL3 family. In terms of assembly, part of the 50S ribosomal subunit. Forms a cluster with proteins L14 and L19.

In terms of biological role, one of the primary rRNA binding proteins, it binds directly near the 3'-end of the 23S rRNA, where it nucleates assembly of the 50S subunit. This is Large ribosomal subunit protein uL3 from Chlorobium phaeobacteroides (strain DSM 266 / SMG 266 / 2430).